The following is a 312-amino-acid chain: MSSACDHETEASHVNIPETTPEENGSNSSTPTSEIGPACVVSPAPGETGAPPPKRRRPCGLPQGVALINTSVSTHPLFTTSCQSSWEDVEREFNIAPSWRPILEREMQQPYVRLLLNEYKLRCASEEVFPPKEDIFAWTRFSPPEKVRVVIVGQDPYHAPGQAHGLAFSVRKGVPVPPSLRNIYSAVQKSYPSFRHPMHGFLERWAEQGVLLINTTLTVARGKPGSHATLGWHRLVRAVIDRLCTTSQGLVFMLWGAHAQKSCSPNRQHHLVLTYGHPSPLSRVNFRDCPHFLEANAYLTKTGRKPVDWQIE.

Over residues 1 to 11 (MSSACDHETEA) the composition is skewed to basic and acidic residues. Residues 1 to 61 (MSSACDHETE…PPKRRRPCGL (61 aa)) form a disordered region. Over residues 22–33 (EENGSNSSTPTS) the composition is skewed to polar residues. The Proton acceptor role is filled by D155.

Belongs to the uracil-DNA glycosylase (UDG) superfamily. UNG family.

It is found in the host nucleus. The catalysed reaction is Hydrolyzes single-stranded DNA or mismatched double-stranded DNA and polynucleotides, releasing free uracil.. In terms of biological role, excises uracil residues from the DNA which can arise as a result of misincorporation of dUMP residues by DNA polymerase or deamination of cytosines. Therefore may reduce deleterious uracil incorporation into the viral genome, particularly in terminally differentiated cells which lack DNA repair enzymes. The chain is Uracil-DNA glycosylase (61) from Equine herpesvirus 1 (strain V592) (EHV-1).